Reading from the N-terminus, the 339-residue chain is MASFEAQQETFDCSEYGNGSCPENERSLGVRAAMYSLMACAIFITIFGNLAMIISISYFKQLHTPTNLLILSMAVTDFLLGFTIMPYSMVRSVENCWYFGLTFCKIHYSFDLMLSITSIFHLCSVAVDRFYAICHPLHYCTKMTIPVVRRLLLVCWSVPGAFAFGVVFSEAYADGIEGYDILVACSSSCPVMFNKLWGTTLFVAGFFTPSSMMVGIYGKIFAVSKKHARVIDNLPENQNNQMRKDKKAAKTLGIVMGVFLLCWFPCFFTILLDPFLNFSTPAVLFDALTWFGYFNSTCNPLIYGFFYPWFRRALKYILLGKIFSSHFHNTNLFTQKETE.

The Extracellular portion of the chain corresponds to 1-36 (MASFEAQQETFDCSEYGNGSCPENERSLGVRAAMYS). Asparagine 18 carries N-linked (GlcNAc...) asparagine glycosylation. Intrachain disulfides connect cysteine 21/cysteine 185 and cysteine 104/cysteine 189. A helical membrane pass occupies residues 37-57 (LMACAIFITIFGNLAMIISIS). At 58–67 (YFKQLHTPTN) the chain is on the cytoplasmic side. A helical membrane pass occupies residues 68–88 (LLILSMAVTDFLLGFTIMPYS). Residues 89-106 (MVRSVENCWYFGLTFCKI) lie on the Extracellular side of the membrane. The chain crosses the membrane as a helical span at residues 107–127 (HYSFDLMLSITSIFHLCSVAV). The Cytoplasmic portion of the chain corresponds to 128–150 (DRFYAICHPLHYCTKMTIPVVRR). A helical membrane pass occupies residues 151-171 (LLLVCWSVPGAFAFGVVFSEA). Residues 172 to 195 (YADGIEGYDILVACSSSCPVMFNK) are Extracellular-facing. The chain crosses the membrane as a helical span at residues 196 to 216 (LWGTTLFVAGFFTPSSMMVGI). Topologically, residues 217 to 251 (YGKIFAVSKKHARVIDNLPENQNNQMRKDKKAAKT) are cytoplasmic. The chain crosses the membrane as a helical span at residues 252–272 (LGIVMGVFLLCWFPCFFTILL). Residues 273 to 287 (DPFLNFSTPAVLFDA) lie on the Extracellular side of the membrane. N-linked (GlcNAc...) asparagine glycosylation occurs at asparagine 277. A helical membrane pass occupies residues 288-310 (LTWFGYFNSTCNPLIYGFFYPWF). Residues 311–339 (RRALKYILLGKIFSSHFHNTNLFTQKETE) lie on the Cytoplasmic side of the membrane.

It belongs to the G-protein coupled receptor 1 family. As to expression, mainly expressed in neurons of the olfactory epithelium. Also present in the limbic brain areas receiving projection from the olfactory system and several brain regions, including the hippocampus, cerebellum, cortex, raphe nuclei, hypothalamus and habenula.

The protein localises to the cell membrane. Functionally, orphan olfactory receptor specific for trace amines. Trace amine compounds are enriched in animal body fluids and act on trace amine-associated receptors (TAARs) to elicit both intraspecific and interspecific innate behaviors. Ligand-binding causes a conformation change that triggers signaling via the G(s)-class of G-proteins which activate adenylate cyclase. May also be required to provide olfactory input into limbic brain areas to regulate emotional behaviors likely via modulation of the dopamine system. This chain is Trace amine-associated receptor 2, found in Mus musculus (Mouse).